The primary structure comprises 219 residues: Phosphate-specific transport system accessory protein PhoU homolog (219 aa).

This sequence belongs to the PhoU family. Homodimer.

It localises to the cytoplasm. Its function is as follows. Plays a role in the regulation of phosphate uptake. Encoded together with proteins of the phosphate-specific transport (Pst) system in the polycistronic pstSCAB-phoU operon. This Clostridium acetobutylicum (strain ATCC 824 / DSM 792 / JCM 1419 / IAM 19013 / LMG 5710 / NBRC 13948 / NRRL B-527 / VKM B-1787 / 2291 / W) protein is Phosphate-specific transport system accessory protein PhoU homolog.